An 86-amino-acid polypeptide reads, in one-letter code: Large ribosomal subunit protein bL31B (86 aa).

The protein belongs to the bacterial ribosomal protein bL31 family. Type B subfamily. Part of the 50S ribosomal subunit.

The polypeptide is Large ribosomal subunit protein bL31B (Salmonella paratyphi A (strain ATCC 9150 / SARB42)).